A 369-amino-acid chain; its full sequence is 3,7-dimethylxanthine N-methyltransferase TCS1 (369 aa).

An S-adenosyl-L-homocysteine-binding site is contributed by Tyr24. Residue Thr31 coordinates caffeine. 6 residues coordinate S-adenosyl-L-homocysteine: Cys66, Asn71, Asp103, Leu104, Ser138, and Phe139. The caffeine site is built by Tyr156, His159, and Trp160. Position 177 (Asn177) interacts with Mg(2+). A caffeine-binding site is contributed by Arg225. Residues Asp263, Phe265, and Asn266 each coordinate Mg(2+). A caffeine-binding site is contributed by Phe321.

This sequence belongs to the methyltransferase superfamily. Type-7 methyltransferase family. Requires Mg(2+) as cofactor.

The enzyme catalyses 1,7-dimethylxanthine + S-adenosyl-L-methionine = caffeine + S-adenosyl-L-homocysteine + H(+). It carries out the reaction theobromine + S-adenosyl-L-methionine = caffeine + S-adenosyl-L-homocysteine + H(+). It catalyses the reaction 7-methylxanthine + S-adenosyl-L-methionine = theobromine + S-adenosyl-L-homocysteine + H(+). Its pathway is alkaloid biosynthesis. Functionally, involved in the biosynthesis of caffeine in cv. Puer. Involved in the biosynthesis of theacrine in cv. Kucha, a caffeine-like xanthine alkaloid with diverse beneficial biological activities including anti-depressive, sedative, and hypnotic activities, improving learning and memory, increasing exercise activity, and preventing nonalcoholic fatty liver disease. Catalyzes the conversion of 7-methylxanthine (7mX) to theobromine and of theobromine to caffeine. Has 3-N- and 1-N-methylation activity. The polypeptide is 3,7-dimethylxanthine N-methyltransferase TCS1 (Camellia sinensis var. assamica (Assam tea)).